A 109-amino-acid chain; its full sequence is Short-chain dehydrogenase/reductase homolog YusS (109 aa).

Belongs to the short-chain dehydrogenases/reductases (SDR) family.

The chain is Short-chain dehydrogenase/reductase homolog YusS (yusS) from Bacillus subtilis (strain 168).